Here is a 633-residue protein sequence, read N- to C-terminus: Probable potassium transport system protein Kup 2 (633 aa).

The next 12 helical transmembrane spans lie at 18 to 38, 61 to 81, 109 to 129, 145 to 165, 173 to 193, 211 to 231, 255 to 275, 287 to 307, 345 to 365, 371 to 391, 405 to 425, and 427 to 447; these read FLAMTIGAIGVVYGDIGTSPL, LISLMLWTLTIIVTFKYVLFL, LMFMAGILGAALFIGDAMITP, PAFHDYVLPISVGIMVLLFAV, VSIFFGPITLIWFLVLGAAGV, AVTFLWNAGFVGFIVLGAVFL, WFAVVFPALTLNYLGQGALVL, LMFPNWALLPVVLLATAATII, IYLPFVNNALLAGVIVLMFMF, LATAYGISVTGAMVVTTVLAF, ATAVLLPLLVLELFFLGANLF, and IHDGGYVPILIAGTLMTTMWT.

It belongs to the HAK/KUP transporter (TC 2.A.72) family.

Its subcellular location is the cell inner membrane. The catalysed reaction is K(+)(in) + H(+)(in) = K(+)(out) + H(+)(out). Functionally, transport of potassium into the cell. Likely operates as a K(+):H(+) symporter. This Sinorhizobium medicae (strain WSM419) (Ensifer medicae) protein is Probable potassium transport system protein Kup 2.